A 389-amino-acid polypeptide reads, in one-letter code: Chalcone synthase H2 (389 aa).

Residue Cys164 is part of the active site.

It belongs to the thiolase-like superfamily. Chalcone/stilbene synthases family.

Its subcellular location is the cytoplasm. It carries out the reaction (E)-4-coumaroyl-CoA + 3 malonyl-CoA + 3 H(+) = 2',4,4',6'-tetrahydroxychalcone + 3 CO2 + 4 CoA. The protein operates within secondary metabolite biosynthesis; flavonoid biosynthesis. In terms of biological role, involved in the biosynthesis of prenylated phenolics natural products which contribute to the bitter taste of beer and display broad biological activities. Chalcone synthase that can use 4-coumaroyl-CoA to produce 4,2',4',6'-tetrahydroxychalcone (also termed naringenin-chalcone or chalcone) which can, under specific conditions, spontaneously isomerize into naringenin. The protein is Chalcone synthase H2 of Humulus lupulus (European hop).